We begin with the raw amino-acid sequence, 311 residues long: Probable manganese-dependent inorganic pyrophosphatase (311 aa).

The Mn(2+) site is built by His9, Asp13, Asp15, Asp77, His99, and Asp151.

This sequence belongs to the PPase class C family. The cofactor is Mn(2+).

It is found in the cytoplasm. It carries out the reaction diphosphate + H2O = 2 phosphate + H(+). The polypeptide is Probable manganese-dependent inorganic pyrophosphatase (Streptococcus pneumoniae (strain JJA)).